Reading from the N-terminus, the 249-residue chain is tRNA pseudouridine synthase A (249 aa).

The active-site Nucleophile is Asp-53. Tyr-111 is a substrate binding site.

Belongs to the tRNA pseudouridine synthase TruA family. Homodimer.

The catalysed reaction is uridine(38/39/40) in tRNA = pseudouridine(38/39/40) in tRNA. Its function is as follows. Formation of pseudouridine at positions 38, 39 and 40 in the anticodon stem and loop of transfer RNAs. This is tRNA pseudouridine synthase A from Streptococcus pyogenes serotype M1.